Consider the following 232-residue polypeptide: Phosphate import ATP-binding protein PstB (232 aa).

Residues 1 to 227 enclose the ABC transporter domain; it reads MFNINMEIKE…PKDRRTENYI (227 aa). 18 to 25 serves as a coordination point for ATP; sequence GPSGCGKT.

Belongs to the ABC transporter superfamily. Phosphate importer (TC 3.A.1.7) family. The complex is composed of two ATP-binding proteins (PstB), two transmembrane proteins (PstC and PstA) and a solute-binding protein (PstS).

It localises to the cell membrane. The enzyme catalyses phosphate(out) + ATP + H2O = ADP + 2 phosphate(in) + H(+). Its function is as follows. Part of the ABC transporter complex PstSACB involved in phosphate import. Responsible for energy coupling to the transport system. This Mycoplasma mycoides subsp. mycoides SC (strain CCUG 32753 / NCTC 10114 / PG1) protein is Phosphate import ATP-binding protein PstB.